Here is a 281-residue protein sequence, read N- to C-terminus: 2-dehydro-3-deoxyphosphooctonate aldolase (281 aa).

This sequence belongs to the KdsA family.

The protein localises to the cytoplasm. It catalyses the reaction D-arabinose 5-phosphate + phosphoenolpyruvate + H2O = 3-deoxy-alpha-D-manno-2-octulosonate-8-phosphate + phosphate. Its pathway is carbohydrate biosynthesis; 3-deoxy-D-manno-octulosonate biosynthesis; 3-deoxy-D-manno-octulosonate from D-ribulose 5-phosphate: step 2/3. The protein operates within bacterial outer membrane biogenesis; lipopolysaccharide biosynthesis. The sequence is that of 2-dehydro-3-deoxyphosphooctonate aldolase from Stutzerimonas stutzeri (strain A1501) (Pseudomonas stutzeri).